Reading from the N-terminus, the 687-residue chain is DNA-directed RNA polymerase subunit beta' (687 aa).

Residues cysteine 69, cysteine 71, cysteine 87, and cysteine 90 each coordinate Zn(2+). Mg(2+) is bound by residues aspartate 495, aspartate 497, and aspartate 499.

This sequence belongs to the RNA polymerase beta' chain family. RpoC1 subfamily. In plastids the minimal PEP RNA polymerase catalytic core is composed of four subunits: alpha, beta, beta', and beta''. When a (nuclear-encoded) sigma factor is associated with the core the holoenzyme is formed, which can initiate transcription. Mg(2+) is required as a cofactor. Zn(2+) serves as cofactor.

It is found in the plastid. The protein localises to the chloroplast. The enzyme catalyses RNA(n) + a ribonucleoside 5'-triphosphate = RNA(n+1) + diphosphate. In terms of biological role, DNA-dependent RNA polymerase catalyzes the transcription of DNA into RNA using the four ribonucleoside triphosphates as substrates. The polypeptide is DNA-directed RNA polymerase subunit beta' (Solanum tuberosum (Potato)).